The chain runs to 1955 residues: Protocadherin-15 (1955 aa).

An N-terminal signal peptide occupies residues 1–26; that stretch reads MFRQFYLWTCLASGIILGSLFEICLG. The Extracellular portion of the chain corresponds to 27 to 1376; the sequence is QYDDDCKLAR…GESLGYTEGA (1350 aa). Cysteine 32 and cysteine 120 form a disulfide bridge. Cadherin domains lie at 40–147, 148–265, 278–395, 396–509, 510–616, 617–717, 719–819, 820–926, 927–1035, 1037–1144, and 1145–1259; these read PATI…SPTF, KHES…GPMF, RPLT…SPYF, TMPS…TPTF, PEIS…PPRF, PQLM…APVF, PYLP…SPVF, TNST…PPVF, SKRI…IPRF, QEEY…PPVF, and QKKF…PPTL. 3 N-linked (GlcNAc...) asparagine glycosylation sites follow: asparagine 52, asparagine 97, and asparagine 201. 7 N-linked (GlcNAc...) asparagine glycosylation sites follow: asparagine 419, asparagine 559, asparagine 662, asparagine 724, asparagine 768, asparagine 821, and asparagine 851. Residues asparagine 1064, asparagine 1084, and asparagine 1175 are each glycosylated (N-linked (GlcNAc...) asparagine). A helical membrane pass occupies residues 1377 to 1397; the sequence is LLALAFIIILCCIPAILVVLV. Over 1398 to 1955 the chain is Cytoplasmic; it reads SYRQFKVRQA…KQSHSQSTSL (558 aa). Over residues 1426–1444 the composition is skewed to pro residues; it reads VPAPAPVAAPPPPPPPPPG. Disordered regions lie at residues 1426–1446, 1601–1623, 1745–1766, and 1928–1955; these read VPAPAPVAAPPPPPPPPPGAH, QGTRQKAENENTGICTNKRGSSN, CPLPPPPPISPPSPPPAPAPLA, and ITSEQNKGSLNNIVEGTEKQSHSQSTSL. Positions 1928-1941 are enriched in polar residues; the sequence is ITSEQNKGSLNNIV.

In terms of assembly, antiparallel heterodimer with CDH23. Found in a complex with TMIE and LHFPL5. Interacts with LHFPL5/TMHS; this interaction is required for efficient localization to hair bundles. Interacts with MYO7A. Interacts with USH1G; this interaction may recruit USH1G to the plasma membrane. Interacts with TOMT. Isoforms CD1 and CD3 interact with TMC1 (via N-terminus) and TMC2 (via N-terminus). As to expression, expressed in brain, lung, kidney, spleen and testis. Found also in the inner and outer synaptic layers, and the nerve fiber layer in adult and fetal retinas. Found in the supporting cells, outer sulcus cells and spiral ganglion of fetal cochlea. Expressed in cytotoxic tumor-derived T- and NK-cell lines as well as biopsies of nasal NK/T-cell lymphomas. Not detected in normal or in vitro activated peripheral blood cells, CD4 or CD8 lymphocytes or NK cells. Isoform 3 is expressed in brain, heart, cerebellum and kidney. CD1 isoforms, such as isoform 1, have a limited pattern of expression and is detected in testis, retina and cochlea. CD2 isoforms, such as isoforms 4 and 5, are expressed in heart, kidney, thymus, spleen, testis, retina and cochlea. CD3 isoforms, such as isoform 6, are widely expressed.

Its subcellular location is the cell membrane. The protein resides in the secreted. In terms of biological role, calcium-dependent cell-adhesion protein. Essential for maintenance of normal retinal and cochlear function. The protein is Protocadherin-15 (PCDH15) of Homo sapiens (Human).